We begin with the raw amino-acid sequence, 150 residues long: Thyroid hormone-inducible hepatic protein (150 aa).

The tract at residues 83–105 (KVAGNEGSEAENEAAETEEAEED) is disordered. Position 90 is a phosphoserine (serine 90). Positions 90-105 (SEAENEAAETEEAEED) are enriched in acidic residues.

This sequence belongs to the SPOT14 family. In terms of assembly, homodimer. Heterodimer with MID1IP1. Interacts with THRB and PLAGL1. Highly expressed in liver, lactating mammary gland, epididymal, retroperitoneal and brown fat. Mainly expressed in tissues that synthesize triglycerides.

The protein resides in the nucleus. It is found in the cytoplasm. Its function is as follows. Plays a role in the regulation of lipogenesis, especially in lactating mammary gland. Important for the biosynthesis of triglycerides with medium-length fatty acid chains. May modulate lipogenesis by interacting with MID1IP1 and preventing its interaction with ACACA. May function as transcriptional coactivator. May modulate the transcription factor activity of THRB. This chain is Thyroid hormone-inducible hepatic protein (Thrsp), found in Rattus norvegicus (Rat).